Here is a 74-residue protein sequence, read N- to C-terminus: MDPISFKYIAIAFMAFGMAGAALGVASIFNALMNSIARNPSAIEDLQKAALIGAGLAEAMGLFSFILAILLMFT.

2 helical membrane-spanning segments follow: residues 9 to 29 and 51 to 71; these read IAIA…ASIF and LIGA…AILL.

It belongs to the ATPase C chain family. As to quaternary structure, F-type ATPases have 2 components, F(1) - the catalytic core - and F(0) - the membrane proton channel. F(1) has five subunits: alpha(3), beta(3), gamma(1), delta(1), epsilon(1). F(0) has three main subunits: a(1), b(2) and c(10-14). The alpha and beta chains form an alternating ring which encloses part of the gamma chain. F(1) is attached to F(0) by a central stalk formed by the gamma and epsilon chains, while a peripheral stalk is formed by the delta and b chains.

It localises to the cell inner membrane. Functionally, f(1)F(0) ATP synthase produces ATP from ADP in the presence of a proton or sodium gradient. F-type ATPases consist of two structural domains, F(1) containing the extramembraneous catalytic core and F(0) containing the membrane proton channel, linked together by a central stalk and a peripheral stalk. During catalysis, ATP synthesis in the catalytic domain of F(1) is coupled via a rotary mechanism of the central stalk subunits to proton translocation. In terms of biological role, key component of the F(0) channel; it plays a direct role in translocation across the membrane. A homomeric c-ring of between 10-14 subunits forms the central stalk rotor element with the F(1) delta and epsilon subunits. The sequence is that of ATP synthase subunit c from Orientia tsutsugamushi (strain Ikeda) (Rickettsia tsutsugamushi).